We begin with the raw amino-acid sequence, 448 residues long: Zinc finger and BTB domain-containing protein 44 (448 aa).

The 68-residue stretch at 31–98 folds into the BTB domain; sequence CDITIRVQDK…AYTATLSINT (68 aa). Residues 289-298 show a composition bias toward basic and acidic residues; it reads LSDEEVHEEV. Positions 289-320 are disordered; sequence LSDEEVHEEVSQPVSASQSSMSDQQTVPGSEQ. Residues 299–313 show a composition bias toward low complexity; sequence SQPVSASQSSMSDQQ. 2 C2H2-type zinc fingers span residues 394 to 416 and 422 to 444; these read FQCP…MLIH and FQCD…RLKH.

Its subcellular location is the nucleus. The sequence is that of Zinc finger and BTB domain-containing protein 44 (zbtb44) from Xenopus tropicalis (Western clawed frog).